Reading from the N-terminus, the 473-residue chain is Photosystem II CP43 reaction center protein (473 aa).

A propeptide spanning residues 1 to 14 (MKTLYSLRRFYHVE) is cleaved from the precursor. N-acetylthreonine is present on T15. A Phosphothreonine modification is found at T15. 5 consecutive transmembrane segments (helical) span residues 69-93 (LFEV…PHLA), 134-155 (LIGP…RDKN), 178-200 (KAIY…RIID), 255-275 (KPFA…LSYS), and 291-312 (WYNN…ASQS). Residue E367 coordinates [CaMn4O5] cluster. A helical transmembrane segment spans residues 447 to 471 (RARAAAAGFEKGINRENEPVLTLRP).

It belongs to the PsbB/PsbC family. PsbC subfamily. PSII is composed of 1 copy each of membrane proteins PsbA, PsbB, PsbC, PsbD, PsbE, PsbF, PsbH, PsbI, PsbJ, PsbK, PsbL, PsbM, PsbT, PsbX, PsbY, PsbZ, Psb30/Ycf12, at least 3 peripheral proteins of the oxygen-evolving complex and a large number of cofactors. It forms dimeric complexes. The cofactor is Binds multiple chlorophylls and provides some of the ligands for the Ca-4Mn-5O cluster of the oxygen-evolving complex. It may also provide a ligand for a Cl- that is required for oxygen evolution. PSII binds additional chlorophylls, carotenoids and specific lipids..

It is found in the plastid. The protein localises to the chloroplast thylakoid membrane. In terms of biological role, one of the components of the core complex of photosystem II (PSII). It binds chlorophyll and helps catalyze the primary light-induced photochemical processes of PSII. PSII is a light-driven water:plastoquinone oxidoreductase, using light energy to abstract electrons from H(2)O, generating O(2) and a proton gradient subsequently used for ATP formation. The sequence is that of Photosystem II CP43 reaction center protein from Guillardia theta (Cryptophyte).